Reading from the N-terminus, the 367-residue chain is tRNA(Ile)-lysidine synthase, chloroplastic (367 aa).

Residue 64–69 (SGGQDS) participates in ATP binding.

The protein belongs to the tRNA(Ile)-lysidine synthase family.

It is found in the plastid. Its subcellular location is the chloroplast. It carries out the reaction cytidine(34) in tRNA(Ile2) + L-lysine + ATP = lysidine(34) in tRNA(Ile2) + AMP + diphosphate + H(+). In terms of biological role, ligates lysine onto the cytidine present at position 34 of the AUA codon-specific tRNA(Ile) that contains the anticodon CAU, in an ATP-dependent manner. Cytidine is converted to lysidine, thus changing the amino acid specificity of the tRNA from methionine to isoleucine. The protein is tRNA(Ile)-lysidine synthase, chloroplastic of Nephroselmis olivacea (Green alga).